The primary structure comprises 393 residues: Lipid-A-disaccharide synthase (393 aa).

This sequence belongs to the LpxB family.

The catalysed reaction is a lipid X + a UDP-2-N,3-O-bis[(3R)-3-hydroxyacyl]-alpha-D-glucosamine = a lipid A disaccharide + UDP + H(+). It participates in bacterial outer membrane biogenesis; LPS lipid A biosynthesis. Functionally, condensation of UDP-2,3-diacylglucosamine and 2,3-diacylglucosamine-1-phosphate to form lipid A disaccharide, a precursor of lipid A, a phosphorylated glycolipid that anchors the lipopolysaccharide to the outer membrane of the cell. In Actinobacillus pleuropneumoniae serotype 5b (strain L20), this protein is Lipid-A-disaccharide synthase.